Here is a 126-residue protein sequence, read N- to C-terminus: Probable prefoldin subunit 4 (126 aa).

This sequence belongs to the prefoldin subunit beta family. In terms of assembly, heterohexamer of two PFD-alpha type and four PFD-beta type subunits.

Binds specifically to cytosolic chaperonin (c-CPN) and transfers target proteins to it. Binds to nascent polypeptide chain and promotes folding in an environment in which there are many competing pathways for nonnative proteins. Appears to play a non-essential role. The chain is Probable prefoldin subunit 4 from Caenorhabditis briggsae.